The sequence spans 145 residues: Large ribosomal subunit protein uL11 (145 aa).

This sequence belongs to the universal ribosomal protein uL11 family. As to quaternary structure, part of the ribosomal stalk of the 50S ribosomal subunit. Interacts with L10 and the large rRNA to form the base of the stalk. L10 forms an elongated spine to which L12 dimers bind in a sequential fashion forming a multimeric L10(L12)X complex. One or more lysine residues are methylated.

Its function is as follows. Forms part of the ribosomal stalk which helps the ribosome interact with GTP-bound translation factors. This is Large ribosomal subunit protein uL11 from Hydrogenobaculum sp. (strain Y04AAS1).